A 316-amino-acid chain; its full sequence is Transaldolase (316 aa).

Lys-132 serves as the catalytic Schiff-base intermediate with substrate.

Belongs to the transaldolase family. Type 1 subfamily. In terms of assembly, homodimer.

It is found in the cytoplasm. The catalysed reaction is D-sedoheptulose 7-phosphate + D-glyceraldehyde 3-phosphate = D-erythrose 4-phosphate + beta-D-fructose 6-phosphate. Its pathway is carbohydrate degradation; pentose phosphate pathway; D-glyceraldehyde 3-phosphate and beta-D-fructose 6-phosphate from D-ribose 5-phosphate and D-xylulose 5-phosphate (non-oxidative stage): step 2/3. Transaldolase is important for the balance of metabolites in the pentose-phosphate pathway. This chain is Transaldolase, found in Aeromonas salmonicida (strain A449).